We begin with the raw amino-acid sequence, 596 residues long: Protein Malvolio (596 aa).

A disordered region spans residues 1-34 (MSSNEAYHEPGAGGDGPGGSSGASGGGSQRSNQL). A compositionally biased stretch (gly residues) spans 11 to 28 (GAGGDGPGGSSGASGGGS). A glycan (N-linked (GlcNAc...) asparagine) is linked at Asn-41. Helical transmembrane passes span 77 to 97 (LWAFTGPGFLMSIAYLDPGNI), 105 to 125 (AAAKYKILWVLLWATVLGLLM), 154 to 174 (WILWIMIEIAIIGSDMQEVIG), 186 to 206 (VVPLWGGVLITIVDTFTFLFL), 216 to 236 (FLFGTLITIMAVSFGYEYIVS), 263 to 283 (AVGVVGAVIMPHNLYLHSALV), and 309 to 329 (VALFVSFIINLFVVAVFAHGM). Asn-359 is a glycosylation site (N-linked (GlcNAc...) asparagine). The next 5 membrane-spanning stretches (helical) occupy residues 373 to 393 (LFLGCTFGAVAMYIWGVGILA), 424 to 444 (VLVTRCIAIIPTFCLAMFSKM), 463 to 483 (PFAAIPTIAFTSCAAIMGEFV), 490 to 510 (IVSILLTIVVIGVNLYFVVVQ), and 520 to 540 (LLALVCIFAILYILFNLYLVI). Asn-574 carries an N-linked (GlcNAc...) asparagine glycan.

The protein belongs to the NRAMP family. In terms of tissue distribution, expressed in macrophages and in the nervous system.

It is found in the membrane. Putative transporter required for normal taste behavior. May be a nitrite/nitrate transporter. The sequence is that of Protein Malvolio (Mvl) from Drosophila melanogaster (Fruit fly).